We begin with the raw amino-acid sequence, 230 residues long: 2-C-methyl-D-erythritol 4-phosphate cytidylyltransferase (230 aa).

Belongs to the IspD/TarI cytidylyltransferase family. IspD subfamily.

The catalysed reaction is 2-C-methyl-D-erythritol 4-phosphate + CTP + H(+) = 4-CDP-2-C-methyl-D-erythritol + diphosphate. It participates in isoprenoid biosynthesis; isopentenyl diphosphate biosynthesis via DXP pathway; isopentenyl diphosphate from 1-deoxy-D-xylulose 5-phosphate: step 2/6. Functionally, catalyzes the formation of 4-diphosphocytidyl-2-C-methyl-D-erythritol from CTP and 2-C-methyl-D-erythritol 4-phosphate (MEP). The chain is 2-C-methyl-D-erythritol 4-phosphate cytidylyltransferase from Nocardia farcinica (strain IFM 10152).